The sequence spans 104 residues: Co-chaperonin GroES 2 (104 aa).

The protein belongs to the GroES chaperonin family. In terms of assembly, heptamer of 7 subunits arranged in a ring. Interacts with the chaperonin GroEL.

The protein resides in the cytoplasm. Its function is as follows. Together with the chaperonin GroEL, plays an essential role in assisting protein folding. The GroEL-GroES system forms a nano-cage that allows encapsulation of the non-native substrate proteins and provides a physical environment optimized to promote and accelerate protein folding. GroES binds to the apical surface of the GroEL ring, thereby capping the opening of the GroEL channel. The sequence is that of Co-chaperonin GroES 2 from Bradyrhizobium diazoefficiens (strain JCM 10833 / BCRC 13528 / IAM 13628 / NBRC 14792 / USDA 110).